The sequence spans 193 residues: NADH-ubiquinone oxidoreductase chain 2 (193 aa).

A run of 5 helical transmembrane segments spans residues 18–38, 39–59, 83–103, 116–138, and 161–181; these read FYST…KLGA, IFFL…FFLF, FFVL…GFFL, NLAF…LSTV, and LSFL…FFFL.

The protein resides in the mitochondrion inner membrane. The catalysed reaction is a ubiquinone + NADH + 5 H(+)(in) = a ubiquinol + NAD(+) + 4 H(+)(out). Its function is as follows. Core subunit of the mitochondrial membrane respiratory chain NADH dehydrogenase (Complex I) that is believed to belong to the minimal assembly required for catalysis. Complex I functions in the transfer of electrons from NADH to the respiratory chain. The immediate electron acceptor for the enzyme is believed to be ubiquinone. This is NADH-ubiquinone oxidoreductase chain 2 (ND2) from Paramecium tetraurelia.